A 319-amino-acid chain; its full sequence is MSLNFLDFEQPIAELEAKIDSLTAVSRQDEKLDINIDEEVHRLREKSVELTRKIFADLGAWQIAQLARHPQRPYTLDYVRLAFDEFDELAGDRAYADDKAIVGGIARLDGRPVMIIGHQKGRETKEKIRRNFGMPAPEGYRKALRLMEMAERFNMPIITFIDTPGAYPGVGAEERGQSEAIARNLREMSRLKVPVICTVIGEGGSGGALAIGVGDKVNMLQYSTYSVISPEGCASILWKSADKAPLAAEAMGIIAPRLKELKLIDSVIPEPLGGAHRNPEAMAQSLKTQLLADLADLDVLSKDDLLNRRYQRLMSYGYA.

Residues 35-296 (NIDEEVHRLR…KTQLLADLAD (262 aa)) form the CoA carboxyltransferase C-terminal domain.

It belongs to the AccA family. In terms of assembly, acetyl-CoA carboxylase is a heterohexamer composed of biotin carboxyl carrier protein (AccB), biotin carboxylase (AccC) and two subunits each of ACCase subunit alpha (AccA) and ACCase subunit beta (AccD).

The protein localises to the cytoplasm. It catalyses the reaction N(6)-carboxybiotinyl-L-lysyl-[protein] + acetyl-CoA = N(6)-biotinyl-L-lysyl-[protein] + malonyl-CoA. It participates in lipid metabolism; malonyl-CoA biosynthesis; malonyl-CoA from acetyl-CoA: step 1/1. In terms of biological role, component of the acetyl coenzyme A carboxylase (ACC) complex. First, biotin carboxylase catalyzes the carboxylation of biotin on its carrier protein (BCCP) and then the CO(2) group is transferred by the carboxyltransferase to acetyl-CoA to form malonyl-CoA. This is Acetyl-coenzyme A carboxylase carboxyl transferase subunit alpha from Cronobacter sakazakii (strain ATCC BAA-894) (Enterobacter sakazakii).